Here is a 481-residue protein sequence, read N- to C-terminus: Deoxyribodipyrimidine photo-lyase (481 aa).

A Photolyase/cryptochrome alpha/beta domain is found at 1 to 136 (MQLFWHRRDL…AHAQFHDAVH (136 aa)). Tyr228 is a binding site for FAD. Arg232 provides a ligand contact to DNA. 240–244 (TSRLS) is a binding site for FAD. Interaction with DNA regions lie at residues 283 to 290 (QLAWREFY) and 349 to 350 (NR). 380–382 (DHD) lines the FAD pocket. Gln412 contributes to the DNA binding site.

The protein belongs to the DNA photolyase class-1 family. As to quaternary structure, monomer. FAD serves as cofactor. Requires coenzyme F420-(gamma-Glu)n as cofactor.

It catalyses the reaction cyclobutadipyrimidine (in DNA) = 2 pyrimidine residues (in DNA).. Its function is as follows. Involved in repair of UV radiation-induced DNA damage. Catalyzes the light-dependent monomerization (300-600 nm) of cyclobutyl pyrimidine dimers (in cis-syn configuration), which are formed between adjacent bases on the same DNA strand upon exposure to ultraviolet radiation. This Halobacterium salinarum (strain ATCC 700922 / JCM 11081 / NRC-1) (Halobacterium halobium) protein is Deoxyribodipyrimidine photo-lyase (phr).